Consider the following 690-residue polypeptide: Amino-acid acetyltransferase, mitochondrial (690 aa).

A disordered region spans residues 62 to 93; that stretch reads RFPSVKKPKPPIPRQNQGAVETQSGKENEKPG. The span at 75 to 84 shows a compositional bias: polar residues; that stretch reads RQNQGAVETQ. Positions 508–679 constitute an N-acetyltransferase domain; the sequence is DGHHLTLDDP…DYEAVCRSIQ (172 aa).

The protein belongs to the acetyltransferase family.

It localises to the mitochondrion. It carries out the reaction L-glutamate + acetyl-CoA = N-acetyl-L-glutamate + CoA + H(+). It functions in the pathway amino-acid biosynthesis; L-arginine biosynthesis; N(2)-acetyl-L-ornithine from L-glutamate: step 1/4. Its function is as follows. N-acetylglutamate synthase involved in arginine biosynthesis. The sequence is that of Amino-acid acetyltransferase, mitochondrial (arg2) from Talaromyces stipitatus (strain ATCC 10500 / CBS 375.48 / QM 6759 / NRRL 1006) (Penicillium stipitatum).